Here is a 447-residue protein sequence, read N- to C-terminus: Naphthalene 1,2-dioxygenase system, large oxygenase component (447 aa).

Residues 37 to 135 form the Rieske domain; it reads WLFLTHDSLI…IKKKCLGLKE (99 aa). Residues cysteine 79, histidine 81, cysteine 99, and histidine 102 each coordinate [2Fe-2S] cluster. Fe cation-binding residues include histidine 206, histidine 211, and aspartate 360.

It belongs to the bacterial ring-hydroxylating dioxygenase alpha subunit family. In terms of assembly, the naphthalene dioxygenase (NDO) multicomponent enzyme system is composed of an electron transfer component and a dioxygenase component (iron sulfur protein (ISP)). The electron transfer component is composed of a ferredoxin reductase (NagAa) and a ferredoxin (NagAb), and the dioxygenase component is formed by a large alpha subunit (NagAc) and a small beta subunit (NagAd). [2Fe-2S] cluster is required as a cofactor. The cofactor is Fe(2+).

The catalysed reaction is naphthalene + NADH + O2 + H(+) = (1R,2S)-1,2-dihydronaphthalene-1,2-diol + NAD(+). It functions in the pathway aromatic compound metabolism; naphthalene degradation. Functionally, component of the naphthalene dioxygenase (NDO) multicomponent enzyme system which catalyzes the incorporation of both atoms of molecular oxygen into naphthalene to form cis-(1R,2S)-dihydroxy-1,2-dihydronaphthalene. The alpha subunit has a catalytic role in the holoenzyme. Also able to use styrene as substrate. The protein is Naphthalene 1,2-dioxygenase system, large oxygenase component of Ralstonia sp.